The following is a 629-amino-acid chain: Chaperone protein HtpG (629 aa).

The tract at residues 1 to 335 (MSEVETSVEK…TADLPLNVSR (335 aa)) is a; substrate-binding. Positions 336–551 (EMIQESPLLA…EQGPDRQLQK (216 aa)) are b. The tract at residues 552–629 (MLQDAGRIEG…SRVFGRALKE (78 aa)) is c.

This sequence belongs to the heat shock protein 90 family. In terms of assembly, homodimer.

The protein resides in the cytoplasm. Molecular chaperone. Has ATPase activity. This Rhizobium meliloti (strain 1021) (Ensifer meliloti) protein is Chaperone protein HtpG.